The following is a 247-amino-acid chain: Mast cell protease 2 (247 aa).

The signal sequence occupies residues 1–19; sequence MHLLALHLLLFLLGSRAKA. A propeptide spans 20-21 (activation peptide); that stretch reads GE. One can recognise a Peptidase S1 domain in the interval 22 to 245; the sequence is IIGGTECKPH…YRPWINKILR (224 aa). C51 and C67 are joined by a disulfide. The Charge relay system role is filled by H66. An N-linked (GlcNAc...) asparagine glycan is attached at N80. Catalysis depends on D110, which acts as the Charge relay system. 2 disulfide bridges follow: C144–C209 and C175–C188. The Charge relay system role is filled by S203.

The protein belongs to the peptidase S1 family. Granzyme subfamily.

The polypeptide is Mast cell protease 2 (Meriones unguiculatus (Mongolian jird)).